Here is a 562-residue protein sequence, read N- to C-terminus: NAD-dependent malic enzyme (562 aa).

Tyrosine 101 (proton donor) is an active-site residue. Arginine 154 lines the NAD(+) pocket. Lysine 172 (proton acceptor) is an active-site residue. A divalent metal cation contacts are provided by glutamate 243, aspartate 244, and aspartate 267. Aspartate 267 and asparagine 415 together coordinate NAD(+).

The protein belongs to the malic enzymes family. Homotetramer. Mg(2+) serves as cofactor. Mn(2+) is required as a cofactor.

The enzyme catalyses (S)-malate + NAD(+) = pyruvate + CO2 + NADH. The catalysed reaction is oxaloacetate + H(+) = pyruvate + CO2. The polypeptide is NAD-dependent malic enzyme (Idiomarina loihiensis (strain ATCC BAA-735 / DSM 15497 / L2-TR)).